Reading from the N-terminus, the 227-residue chain is Cytochrome c oxidase subunit 2 (227 aa).

Residues 1–26 are Mitochondrial intermembrane-facing; sequence MATWSNLNLQNSSSPLMEQLIFFHDH. A helical membrane pass occupies residues 27-48; that stretch reads TLMILLMITVLVAYIMSMLFFN. Over 49–62 the chain is Mitochondrial matrix; that stretch reads LYTNRFLLEGQTIE. The chain crosses the membrane as a helical span at residues 63 to 82; that stretch reads IIWTILPAITLIFIALPSLR. Residues 83 to 227 lie on the Mitochondrial intermembrane side of the membrane; sequence LLYLLDESMD…FINWIKNYSS (145 aa). Positions 160, 195, 197, 199, 203, and 206 each coordinate Cu cation. Glu-197 provides a ligand contact to Mg(2+).

This sequence belongs to the cytochrome c oxidase subunit 2 family. Component of the cytochrome c oxidase (complex IV, CIV), a multisubunit enzyme composed of a catalytic core of 3 subunits and several supernumerary subunits. The complex exists as a monomer or a dimer and forms supercomplexes (SCs) in the inner mitochondrial membrane with ubiquinol-cytochrome c oxidoreductase (cytochrome b-c1 complex, complex III, CIII). The cofactor is Cu cation.

It localises to the mitochondrion inner membrane. The enzyme catalyses 4 Fe(II)-[cytochrome c] + O2 + 8 H(+)(in) = 4 Fe(III)-[cytochrome c] + 2 H2O + 4 H(+)(out). Component of the cytochrome c oxidase, the last enzyme in the mitochondrial electron transport chain which drives oxidative phosphorylation. The respiratory chain contains 3 multisubunit complexes succinate dehydrogenase (complex II, CII), ubiquinol-cytochrome c oxidoreductase (cytochrome b-c1 complex, complex III, CIII) and cytochrome c oxidase (complex IV, CIV), that cooperate to transfer electrons derived from NADH and succinate to molecular oxygen, creating an electrochemical gradient over the inner membrane that drives transmembrane transport and the ATP synthase. Cytochrome c oxidase is the component of the respiratory chain that catalyzes the reduction of oxygen to water. Electrons originating from reduced cytochrome c in the intermembrane space (IMS) are transferred via the dinuclear copper A center (CU(A)) of subunit 2 and heme A of subunit 1 to the active site in subunit 1, a binuclear center (BNC) formed by heme A3 and copper B (CU(B)). The BNC reduces molecular oxygen to 2 water molecules using 4 electrons from cytochrome c in the IMS and 4 protons from the mitochondrial matrix. This chain is Cytochrome c oxidase subunit 2 (COII), found in Acheta domesticus (House cricket).